Reading from the N-terminus, the 323-residue chain is Beta-ketoacyl-[acyl-carrier-protein] synthase III (323 aa).

Active-site residues include cysteine 113 and histidine 250. Residues 251 to 255 (QANRR) are ACP-binding. Asparagine 280 is a catalytic residue.

This sequence belongs to the thiolase-like superfamily. FabH family. In terms of assembly, homodimer.

The protein localises to the cytoplasm. The enzyme catalyses malonyl-[ACP] + acetyl-CoA + H(+) = 3-oxobutanoyl-[ACP] + CO2 + CoA. Its pathway is lipid metabolism; fatty acid biosynthesis. In terms of biological role, catalyzes the condensation reaction of fatty acid synthesis by the addition to an acyl acceptor of two carbons from malonyl-ACP. Catalyzes the first condensation reaction which initiates fatty acid synthesis and may therefore play a role in governing the total rate of fatty acid production. Possesses both acetoacetyl-ACP synthase and acetyl transacylase activities. Its substrate specificity determines the biosynthesis of branched-chain and/or straight-chain of fatty acids. In Allorhizobium ampelinum (strain ATCC BAA-846 / DSM 112012 / S4) (Agrobacterium vitis (strain S4)), this protein is Beta-ketoacyl-[acyl-carrier-protein] synthase III.